The primary structure comprises 578 residues: Proline--tRNA ligase (578 aa).

The protein belongs to the class-II aminoacyl-tRNA synthetase family. ProS type 1 subfamily. In terms of assembly, homodimer.

The protein localises to the cytoplasm. The enzyme catalyses tRNA(Pro) + L-proline + ATP = L-prolyl-tRNA(Pro) + AMP + diphosphate. Catalyzes the attachment of proline to tRNA(Pro) in a two-step reaction: proline is first activated by ATP to form Pro-AMP and then transferred to the acceptor end of tRNA(Pro). As ProRS can inadvertently accommodate and process non-cognate amino acids such as alanine and cysteine, to avoid such errors it has two additional distinct editing activities against alanine. One activity is designated as 'pretransfer' editing and involves the tRNA(Pro)-independent hydrolysis of activated Ala-AMP. The other activity is designated 'posttransfer' editing and involves deacylation of mischarged Ala-tRNA(Pro). The misacylated Cys-tRNA(Pro) is not edited by ProRS. This chain is Proline--tRNA ligase, found in Burkholderia mallei (strain ATCC 23344).